Here is a 598-residue protein sequence, read N- to C-terminus: Fibulin-1 (598 aa).

31 disulfides stabilise this stretch: A1–C25, C7–C26, C28–C52, C29–C59, C42–C60, C96–C106, C102–C115, C117–C130, C136–C149, C143–C158, C164–C176, C182–C195, C189–C204, C210–C222, C228–C242, C257–C270, C275–C288, C282–C297, C299–C312, C318–C330, C326–C339, C341–C354, C360–C369, C365–C378, C380–C394, C400–C413, C409–C422, C424–C438, C444–C457, C451–C466, and C471–C483. 2 consecutive Anaphylatoxin-like domains span residues A1–H27 and C28–C60. Residue N14 is glycosylated (N-linked (GlcNAc...) asparagine). The region spanning L92–E131 is the EGF-like 1 domain. Positions D132 to K177 constitute an EGF-like 2; calcium-binding domain. The 46-residue stretch at D178–I223 folds into the EGF-like 3; calcium-binding domain. Positions D224–C270 constitute an EGF-like 4; calcium-binding domain. Residues D271 to V313 form the EGF-like 5; calcium-binding domain. Positions D271–E355 are self-association and FN1-binding. An EGF-like 6; calcium-binding domain is found at D314 to E355. Residues D356–E395 enclose the EGF-like 7; calcium-binding domain. The region spanning D396–Q439 is the EGF-like 8; calcium-binding domain. An EGF-like 9; calcium-binding domain is found at D440–E484. N450 and N454 each carry an N-linked (GlcNAc...) asparagine glycan.

This sequence belongs to the fibulin family. As to quaternary structure, homomultimerizes and interacts with various extracellular matrix components. Interacts with FBLN7. Interacts with the mature/soluble form of DTR. Interacts with CCN3.

It is found in the secreted. The protein resides in the extracellular space. Its subcellular location is the extracellular matrix. In terms of biological role, incorporated into fibronectin-containing matrix fibers. May play a role in cell adhesion and migration along protein fibers within the extracellular matrix (ECM). Could be important for certain developmental processes and contribute to the supramolecular organization of ECM architecture, in particular to those of basement membranes. May serve to anchor the mature/soluble form of DTR to its fibers as it migrates through the extracellular matrix. The direct physical association with DTR may be useful in such tissue developmental processes as wound healing. The protein is Fibulin-1 (FBLN1) of Chlorocebus aethiops (Green monkey).